A 355-amino-acid chain; its full sequence is MGDRPWQQQLQPHDQQAASCSVTAGMMMQASATSSSIHGNNIIRKDPGGGYDMAELDHIFLYLNSQDQASAAIQEQPQTLNIFPSQPMHAGEPSPKGSSSMAAINSAPSNNALAIAAGSSKRPPAAAAAGGQPSRLNNPADQPSASGKDGKAAVVKKEGGGGGGKHHGGASSAAASEHEGPKTPDAKTLRRLAQNREAARKSRLRKKAYIQNLETSRIRLSQLEQELVQRSRTQGAILGGGAFSAGIGGQSPEAAWFDGEYARWVESHERMMAHMRAAVEEQPQHGGVAAAAAEAQLRQLVDAAVAHHGVLVELKAAVASADVFHLVSGTWLPAAERCFLWIGGFRPSELIKVST.

2 disordered regions span residues 83-104 and 118-188; these read FPSQ…MAAI and GSSK…DAKT. Low complexity predominate over residues 118-134; the sequence is GSSKRPPAAAAAGGQPS. Residues 135–144 show a composition bias toward polar residues; that stretch reads RLNNPADQPS. 2 stretches are compositionally biased toward basic and acidic residues: residues 148-159 and 176-188; these read KDGKAAVVKKEG and SEHE…DAKT. The region spanning 185 to 230 is the bZIP domain; that stretch reads DAKTLRRLAQNREAARKSRLRKKAYIQNLETSRIRLSQLEQELVQR. The segment at 187–207 is basic motif; it reads KTLRRLAQNREAARKSRLRKK. The leucine-zipper stretch occupies residues 213–227; it reads LETSRIRLSQLEQEL. Positions 254–355 constitute a DOG1 domain; it reads AAWFDGEYAR…RPSELIKVST (102 aa).

It belongs to the bZIP family. In terms of assembly, interacts with NPR5/NH4, NH5.1 and NH5.2.

It is found in the nucleus. In terms of biological role, transcriptional regulator involved in defense response. In Oryza sativa subsp. japonica (Rice), this protein is Transcription factor TGAL9.